We begin with the raw amino-acid sequence, 88 residues long: Large ribosomal subunit protein bL27 (88 aa).

It belongs to the bacterial ribosomal protein bL27 family.

The sequence is that of Large ribosomal subunit protein bL27 from Carboxydothermus hydrogenoformans (strain ATCC BAA-161 / DSM 6008 / Z-2901).